A 125-amino-acid polypeptide reads, in one-letter code: Insulin growth factor-like family member 3 (125 aa).

An N-terminal signal peptide occupies residues 1–24 (MRPRCCILALVCWITVFLLQCSKG).

This sequence belongs to the IGFL family. As to expression, detected in the cerebellum.

The protein resides in the secreted. Its function is as follows. Potential ligand of the IGFLR1 cell membrane receptor. The chain is Insulin growth factor-like family member 3 (IGFL3) from Homo sapiens (Human).